The primary structure comprises 410 residues: Peptidase T (410 aa).

His79 is a binding site for Zn(2+). Residue Asp81 is part of the active site. Asp142 lines the Zn(2+) pocket. The Proton acceptor role is filled by Glu176. Zn(2+) is bound by residues Glu177, Asp199, and His381.

It belongs to the peptidase M20B family. It depends on Zn(2+) as a cofactor.

It is found in the cytoplasm. It catalyses the reaction Release of the N-terminal residue from a tripeptide.. Cleaves the N-terminal amino acid of tripeptides. This chain is Peptidase T, found in Geobacillus sp. (strain WCH70).